Consider the following 447-residue polypeptide: Dihydroorotase (447 aa).

Residues histidine 84 and histidine 86 each coordinate Zn(2+). Residues histidine 86 to arginine 88 and asparagine 118 contribute to the substrate site. The Zn(2+) site is built by aspartate 174, histidine 201, and histidine 255. Asparagine 301 provides a ligand contact to substrate. A Zn(2+)-binding site is contributed by aspartate 328. Residue aspartate 328 is part of the active site. Substrate-binding positions include histidine 332 and phenylalanine 346–glycine 347.

Belongs to the metallo-dependent hydrolases superfamily. DHOase family. Class I DHOase subfamily. The cofactor is Zn(2+).

The catalysed reaction is (S)-dihydroorotate + H2O = N-carbamoyl-L-aspartate + H(+). It functions in the pathway pyrimidine metabolism; UMP biosynthesis via de novo pathway; (S)-dihydroorotate from bicarbonate: step 3/3. Functionally, catalyzes the reversible cyclization of carbamoyl aspartate to dihydroorotate. This is Dihydroorotase from Anaplasma phagocytophilum (strain HZ).